The sequence spans 309 residues: Mitochondrial import receptor subunit TOM34 (309 aa).

Phosphoserine is present on Ser8. 3 TPR repeats span residues 9–42, 51–84, and 86–118; these read VEQLRAAGNQNFRNGQYGEASALYERALRLLQAR, SVLYSNRAACYLKDGNCTDCIKDCTSALALVPFS, and KPLLRRASAYEALEKYSLAYVDYKTVLQIDNSV. The disordered stretch occupies residues 158–187; it reads WSSLPSENHKETAKSKSKETTATKNRVPSA. A Phosphoserine modification is found at Ser160. Residues 164-178 are compositionally biased toward basic and acidic residues; sequence ENHKETAKSKSKETT. Residue Ser186 is modified to Phosphoserine. TPR repeat units follow at residues 193-226, 227-260, and 262-294; these read ARVLKEEGNELVKKGNHKKAIEKYSESLLFSSLE, SATYSNRALCHLVLKQYKEAEKDCTEALKLDGKN, and KAFYRRAQAYKALKDYKSSLADISSLLQIEPRN. Lys197 participates in a covalent cross-link: Glycyl lysine isopeptide (Lys-Gly) (interchain with G-Cter in SUMO2).

The protein belongs to the Tom34 family. Interacts with HSP90A, VCP, ATP6V1D, KIAA0665, AMPK, and DMAP1 through its TPR repeat.

Its subcellular location is the cytoplasm. It is found in the mitochondrion outer membrane. Its function is as follows. Plays a role in the import of cytosolically synthesized preproteins into mitochondria. Binds the mature portion of precursor proteins. Interacts with cellular components, and possesses weak ATPase activity. May be a chaperone-like protein that helps to keep newly synthesized precursors in an unfolded import compatible state. In Rattus norvegicus (Rat), this protein is Mitochondrial import receptor subunit TOM34 (Tomm34).